Reading from the N-terminus, the 431-residue chain is Aspartate--tRNA(Asp/Asn) ligase (431 aa).

Residue glutamate 170 participates in L-aspartate binding. The interval 192 to 195 is aspartate; that stretch reads QLYK. L-aspartate is bound at residue arginine 214. ATP is bound by residues 214–216, 222–224, and glutamate 354; these read RAE and RHL. Mg(2+) contacts are provided by glutamate 354 and serine 357. L-aspartate contacts are provided by serine 357 and arginine 361. 402 to 405 is a binding site for ATP; sequence GLER.

The protein belongs to the class-II aminoacyl-tRNA synthetase family. Type 2 subfamily. In terms of assembly, homodimer. Requires Mg(2+) as cofactor.

It localises to the cytoplasm. It carries out the reaction tRNA(Asx) + L-aspartate + ATP = L-aspartyl-tRNA(Asx) + AMP + diphosphate. Aspartyl-tRNA synthetase with relaxed tRNA specificity since it is able to aspartylate not only its cognate tRNA(Asp) but also tRNA(Asn). Reaction proceeds in two steps: L-aspartate is first activated by ATP to form Asp-AMP and then transferred to the acceptor end of tRNA(Asp/Asn). The chain is Aspartate--tRNA(Asp/Asn) ligase from Methanopyrus kandleri (strain AV19 / DSM 6324 / JCM 9639 / NBRC 100938).